The primary structure comprises 255 residues: 4-hydroxy-tetrahydrodipicolinate reductase (255 aa).

NAD(+) is bound by residues glycine 9–methionine 14, aspartate 35, glycine 89–threonine 91, and alanine 115–phenylalanine 118. The active-site Proton donor/acceptor is the histidine 145. Histidine 146 contacts (S)-2,3,4,5-tetrahydrodipicolinate. Lysine 149 serves as the catalytic Proton donor. Residue glycine 155–threonine 156 coordinates (S)-2,3,4,5-tetrahydrodipicolinate.

It belongs to the DapB family.

The protein resides in the cytoplasm. The catalysed reaction is (S)-2,3,4,5-tetrahydrodipicolinate + NAD(+) + H2O = (2S,4S)-4-hydroxy-2,3,4,5-tetrahydrodipicolinate + NADH + H(+). It catalyses the reaction (S)-2,3,4,5-tetrahydrodipicolinate + NADP(+) + H2O = (2S,4S)-4-hydroxy-2,3,4,5-tetrahydrodipicolinate + NADPH + H(+). It functions in the pathway amino-acid biosynthesis; L-lysine biosynthesis via DAP pathway; (S)-tetrahydrodipicolinate from L-aspartate: step 4/4. In terms of biological role, catalyzes the conversion of 4-hydroxy-tetrahydrodipicolinate (HTPA) to tetrahydrodipicolinate. This Streptococcus pneumoniae (strain 70585) protein is 4-hydroxy-tetrahydrodipicolinate reductase.